Here is a 160-residue protein sequence, read N- to C-terminus: Crossover junction endodeoxyribonuclease RuvC (160 aa).

Catalysis depends on residues Asp-7, Glu-67, and Asp-138. Positions 7, 67, and 138 each coordinate Mg(2+).

The protein belongs to the RuvC family. As to quaternary structure, homodimer which binds Holliday junction (HJ) DNA. The HJ becomes 2-fold symmetrical on binding to RuvC with unstacked arms; it has a different conformation from HJ DNA in complex with RuvA. In the full resolvosome a probable DNA-RuvA(4)-RuvB(12)-RuvC(2) complex forms which resolves the HJ. Mg(2+) serves as cofactor.

Its subcellular location is the cytoplasm. The catalysed reaction is Endonucleolytic cleavage at a junction such as a reciprocal single-stranded crossover between two homologous DNA duplexes (Holliday junction).. In terms of biological role, the RuvA-RuvB-RuvC complex processes Holliday junction (HJ) DNA during genetic recombination and DNA repair. Endonuclease that resolves HJ intermediates. Cleaves cruciform DNA by making single-stranded nicks across the HJ at symmetrical positions within the homologous arms, yielding a 5'-phosphate and a 3'-hydroxyl group; requires a central core of homology in the junction. The consensus cleavage sequence is 5'-(A/T)TT(C/G)-3'. Cleavage occurs on the 3'-side of the TT dinucleotide at the point of strand exchange. HJ branch migration catalyzed by RuvA-RuvB allows RuvC to scan DNA until it finds its consensus sequence, where it cleaves and resolves the cruciform DNA. The protein is Crossover junction endodeoxyribonuclease RuvC of Brachyspira hyodysenteriae (strain ATCC 49526 / WA1).